We begin with the raw amino-acid sequence, 666 residues long: Nuclear distribution protein nudE homolog 1 (666 aa).

Positions 14–195 form a coiled coil; it reads EEEIAHYREK…KDQLARAIAT (182 aa). 4 disordered regions span residues 40 to 64, 220 to 310, 369 to 388, and 397 to 666; these read EFQQ…KQQA, DDIN…SGIP, KRVT…PAPH, and DHNT…KVKK. Residues 251–274 are compositionally biased toward polar residues; that stretch reads RSGTMSSIPVASPSTKRFSQQIPH. 2 stretches are compositionally biased toward low complexity: residues 275–287 and 372–383; these read SPSF…STTS and TSTTSTTSSTTT. Residues 400–410 are compositionally biased toward polar residues; the sequence is TTPTAQSQQFP. Composition is skewed to low complexity over residues 449–465, 473–485, and 536–554; these read PTFR…LPSR, ASGS…SGTA, and SATP…STSN. Polar residues-rich tracts occupy residues 587-599 and 614-638; these read RQSL…TPTT and SSLS…SGRP.

Belongs to the nudE family. In terms of assembly, self-associates. Interacts with PAC1.

The protein resides in the cytoplasm. Its subcellular location is the cytoskeleton. Required for nuclear migration. This Cryptococcus neoformans var. neoformans serotype D (strain B-3501A) (Filobasidiella neoformans) protein is Nuclear distribution protein nudE homolog 1 (NDE1).